Reading from the N-terminus, the 178-residue chain is Ribosome maturation factor RimM (178 aa).

Residues 100 to 178 enclose the PRC barrel domain; sequence TDGEYYWYQL…EMKVEWDADF (79 aa).

This sequence belongs to the RimM family. As to quaternary structure, binds ribosomal protein uS19.

Its subcellular location is the cytoplasm. An accessory protein needed during the final step in the assembly of 30S ribosomal subunit, possibly for assembly of the head region. Essential for efficient processing of 16S rRNA. May be needed both before and after RbfA during the maturation of 16S rRNA. It has affinity for free ribosomal 30S subunits but not for 70S ribosomes. The chain is Ribosome maturation factor RimM from Pseudomonas fluorescens (strain SBW25).